The primary structure comprises 816 residues: Sucrose synthase 2 (816 aa).

Residue Ser15 is modified to Phosphoserine. Residues 280–757 are GT-B glycosyltransferase; the sequence is MVFNVVILSP…GLQRIEEKYT (478 aa).

Belongs to the glycosyltransferase 1 family. Plant sucrose synthase subfamily.

The catalysed reaction is an NDP-alpha-D-glucose + D-fructose = a ribonucleoside 5'-diphosphate + sucrose + H(+). Functionally, sucrose-cleaving enzyme that provides UDP-glucose and fructose for various metabolic pathways. The chain is Sucrose synthase 2 (SUS1) from Zea mays (Maize).